The following is a 200-amino-acid chain: ATP-dependent Clp protease proteolytic subunit (200 aa).

Serine 104 acts as the Nucleophile in catalysis. Histidine 129 is a catalytic residue.

Belongs to the peptidase S14 family. As to quaternary structure, fourteen ClpP subunits assemble into 2 heptameric rings which stack back to back to give a disk-like structure with a central cavity, resembling the structure of eukaryotic proteasomes.

The protein resides in the cytoplasm. It catalyses the reaction Hydrolysis of proteins to small peptides in the presence of ATP and magnesium. alpha-casein is the usual test substrate. In the absence of ATP, only oligopeptides shorter than five residues are hydrolyzed (such as succinyl-Leu-Tyr-|-NHMec, and Leu-Tyr-Leu-|-Tyr-Trp, in which cleavage of the -Tyr-|-Leu- and -Tyr-|-Trp bonds also occurs).. Cleaves peptides in various proteins in a process that requires ATP hydrolysis. Has a chymotrypsin-like activity. Plays a major role in the degradation of misfolded proteins. This is ATP-dependent Clp protease proteolytic subunit from Rubrobacter xylanophilus (strain DSM 9941 / JCM 11954 / NBRC 16129 / PRD-1).